Here is a 200-residue protein sequence, read N- to C-terminus: Putative hydrolase MhqD (200 aa).

Residues Ser100, Asp150, and His181 each act as charge relay system in the active site.

The protein belongs to the AB hydrolase superfamily. AB hydrolase 2 family.

It localises to the cytoplasm. Functionally, putative hydrolase that may contribute to the degradation of aromatic compounds. The chain is Putative hydrolase MhqD (mhqD) from Bacillus subtilis (strain 168).